A 266-amino-acid polypeptide reads, in one-letter code: Hydroxypyruvate/pyruvate aldolase (266 aa).

The active-site Proton acceptor is His48. Residues Glu152 and Asp178 each contribute to the a divalent metal cation site.

Belongs to the HpcH/HpaI aldolase family. A divalent metal cation is required as a cofactor.

The enzyme catalyses D-glyceraldehyde + pyruvate = 2-dehydro-3-deoxy-L-galactonate. It catalyses the reaction 2-dehydro-3-deoxy-D-gluconate = D-glyceraldehyde + pyruvate. Its function is as follows. Aldolase which can catalyze in vitro the aldolisation reaction between hydroxypyruvate (HPA) or pyruvate (PA) and D-glyceraldehyde (D-GA). The condensation of pyruvate and D-glyceraldehyde produces 2-dehydro-3-deoxy-L-galactonate as the major product and 2-dehydro-3-deoxy-D-gluconate. Has weak activity with hydroxypyruvate and D-glyceraldehyde. The chain is Hydroxypyruvate/pyruvate aldolase from Agrobacterium fabrum (strain C58 / ATCC 33970) (Agrobacterium tumefaciens (strain C58)).